A 282-amino-acid polypeptide reads, in one-letter code: Putative phosphoenolpyruvate synthase regulatory protein (282 aa).

161–168 (GVSRSGKT) is an ADP binding site.

This sequence belongs to the pyruvate, phosphate/water dikinase regulatory protein family. PSRP subfamily.

The enzyme catalyses [pyruvate, water dikinase] + ADP = [pyruvate, water dikinase]-phosphate + AMP + H(+). It catalyses the reaction [pyruvate, water dikinase]-phosphate + phosphate + H(+) = [pyruvate, water dikinase] + diphosphate. In terms of biological role, bifunctional serine/threonine kinase and phosphorylase involved in the regulation of the phosphoenolpyruvate synthase (PEPS) by catalyzing its phosphorylation/dephosphorylation. The protein is Putative phosphoenolpyruvate synthase regulatory protein of Janthinobacterium sp. (strain Marseille) (Minibacterium massiliensis).